Consider the following 422-residue polypeptide: Probable sucrose-phosphatase 2 (422 aa).

Belongs to the sucrose phosphatase family. In terms of assembly, homodimer. The cofactor is Mg(2+).

The enzyme catalyses sucrose 6(F)-phosphate + H2O = sucrose + phosphate. It participates in glycan biosynthesis; sucrose biosynthesis; sucrose from D-fructose 6-phosphate and UDP-alpha-D-glucose: step 2/2. In terms of biological role, catalyzes the final step of sucrose synthesis. This is Probable sucrose-phosphatase 2 (SPP2) from Arabidopsis thaliana (Mouse-ear cress).